Here is a 763-residue protein sequence, read N- to C-terminus: ATP-dependent RNA helicase glh-1 (763 aa).

Residues 1-30 are disordered; sequence MSDGWSDSESAAKAKTGFGSGGGFGGGNNG. The segment covering 18-30 has biased composition (gly residues); sequence FGSGGGFGGGNNG. 7 consecutive repeat copies span residues 24 to 33, 34 to 43, 44 to 53, 54 to 63, 64 to 73, 74 to 83, and 84 to 93. The tract at residues 24 to 93 is 7 X 10 AA tandem repeats, Gly-rich; sequence FGGGNNGGSG…FGGGSTGGSP (70 aa). 2 CCHC-type zinc fingers span residues 158 to 175 and 183 to 200; these read NNCF…DCPE and RVCY…ECTE. The tract at residues 193–230 is disordered; the sequence is HTSRECTEERKPREGRTGGFGGGAGFGNNGGNDGFGGD. Residues 194-208 show a composition bias toward basic and acidic residues; it reads TSRECTEERKPREGR. Residues 209-230 are compositionally biased toward gly residues; it reads TGGFGGGAGFGNNGGNDGFGGD. CCHC-type zinc fingers lie at residues 242-259 and 262-279; these read MKCF…ECPE and RGCF…ECPN. The short motif at 341–369 is the Q motif element; the sequence is KTFAEANLTETMQKNVAHAGYSKTTPIQQ. The region spanning 372-556 is the Helicase ATP-binding domain; that stretch reads LPLVHQGYDI…RAFLRENYVM (185 aa). 385-392 serves as a coordination point for ATP; sequence AQTGSGKT. A Phosphodegron motif is present at residues 423–427; the sequence is ILTPT. A DEAD box motif is present at residues 499–502; sequence DEAD. Residues 592 to 739 enclose the Helicase C-terminal domain; it reads DIDSYTTEKS…IVPDWMQGAA (148 aa).

Belongs to the DEAD box helicase family. DDX4/VASA subfamily. Interacts with csn-5; this may prevent glh-1 degradation induced by kgb-1. Interacts with zyx-1. Interacts (via the N-terminal region containing the four CCHC zinc fingers) with pan-1. Interacts with kgb-1; this may promote glh-1 degradation by the proteasome. Phosphorylated by kgb-1 (in vitro); this may be responsible for its degradation by the proteasome.

It is found in the cytoplasm. The protein localises to the cytoplasmic granule. Its subcellular location is the perinuclear region. It catalyses the reaction ATP + H2O = ADP + phosphate + H(+). Its function is as follows. Probable ATP-binding RNA helicase. May act redundantly with the P-granule component glh-4 to regulate the formation of the granular structure of P-granules in embryos. Plays a role in positively regulating the localization of pgl-1 to P-granules. May play a role in transgenerational epigenetic inheritance. May protect somatic cells from excessive apoptosis during normal development. The protein is ATP-dependent RNA helicase glh-1 of Caenorhabditis elegans.